Here is a 143-residue protein sequence, read N- to C-terminus: Periplasmic nitrate reductase, electron transfer subunit (143 aa).

A signal peptide spans 1-22; it reads MKKILTLAAIVLAIGGCSGQQA. 8 residues coordinate heme c: His-72, Cys-85, Cys-88, His-89, His-106, Cys-121, Cys-124, and His-125.

This sequence belongs to the NapB family. In terms of assembly, component of the periplasmic nitrate reductase NapAB complex composed of NapA and NapB. Post-translationally, binds 2 heme C groups per subunit.

The protein localises to the periplasm. In terms of biological role, electron transfer subunit of the periplasmic nitrate reductase complex NapAB. Receives electrons from the membrane-anchored tetraheme c-type CymA protein and transfers these to NapA subunit, thus allowing electron flow between membrane and periplasm. Not essential for nitrate reduction but confers advantage to the organism when grown on nitrate and thereby a fitness gain in utilizing nitrate. In Shewanella oneidensis (strain ATCC 700550 / JCM 31522 / CIP 106686 / LMG 19005 / NCIMB 14063 / MR-1), this protein is Periplasmic nitrate reductase, electron transfer subunit.